Reading from the N-terminus, the 1373-residue chain is Insulin-like growth factor 1 receptor (1373 aa).

An N-terminal signal peptide occupies residues 1-30; it reads MKSGSGGGSPTSLWGLVFLSAALSLWPTSG. Cys-33 and Cys-52 form a disulfide bridge. N-linked (GlcNAc...) asparagine glycosylation is found at Asn-51, Asn-102, and Asn-135. 13 cysteine pairs are disulfide-bonded: Cys-150–Cys-178, Cys-182–Cys-205, Cys-192–Cys-211, Cys-215–Cys-224, Cys-219–Cys-230, Cys-231–Cys-239, Cys-235–Cys-248, Cys-251–Cys-260, Cys-264–Cys-276, Cys-282–Cys-303, Cys-307–Cys-321, Cys-324–Cys-328, and Cys-332–Cys-354. N-linked (GlcNAc...) asparagine glycosylation is present at Asn-245. Asn-314 is a glycosylation site (N-linked (GlcNAc...) asparagine). 2 N-linked (GlcNAc...) asparagine glycosylation sites follow: Asn-418 and Asn-439. Residues Cys-456 and Cys-489 are joined by a disulfide bond. 4 Fibronectin type-III domains span residues 490–610, 611–709, 735–829, and 835–928; these read ESDV…TNAS, VPSI…TEAE, RPER…TMPA, and IPGP…VPAK. Residues Asn-535, Asn-608, Asn-623, Asn-641, Asn-748, Asn-757, Asn-765, Asn-901, and Asn-914 are each glycosylated (N-linked (GlcNAc...) asparagine). The Extracellular portion of the chain corresponds to 742 to 936; sequence DVMQVANTTM…AKTTYENFMH (195 aa). The helical transmembrane segment at 937–960 threads the bilayer; the sequence is LIIALPVAILLIVGGLVIMLYVFH. Residues 961–1373 lie on the Cytoplasmic side of the membrane; sequence RKRNNSRLGN…ALPLPQSSTC (413 aa). The IRS1- and SHC1-binding motif lies at 978 to 981; sequence NPEY. A Phosphotyrosine modification is found at Tyr-981. The Protein kinase domain occupies 1000-1276; the sequence is ITMNRELGQG…SIKDEMEPSF (277 aa). ATP is bound by residues 1006-1014 and Lys-1034; that span reads LGQGSFGMV. Asp-1137 functions as the Proton acceptor in the catalytic mechanism. Phosphotyrosine; by autocatalysis occurs at positions 1163, 1167, and 1168. Residues Lys-1170 and Lys-1173 each participate in a glycyl lysine isopeptide (Lys-Gly) (interchain with G-Cter in ubiquitin) cross-link. At Ser-1280 the chain carries Phosphoserine; by GSK3-beta. Positions 1283–1373 are disordered; the sequence is YSEENKPPEP…ALPLPQSSTC (91 aa). The residue at position 1284 (Ser-1284) is a Phosphoserine. The segment covering 1292–1305 has biased composition (acidic residues); that stretch reads PEELEMELEMEPEN. The segment covering 1306–1322 has biased composition (low complexity); the sequence is MESVPLDPSASSASLPL. The segment covering 1323 to 1332 has biased composition (basic and acidic residues); that stretch reads PERHSGHKAE.

It belongs to the protein kinase superfamily. Tyr protein kinase family. Insulin receptor subfamily. In terms of assembly, tetramer of 2 alpha and 2 beta chains linked by disulfide bonds. The alpha chains contribute to the formation of the ligand-binding domain, while the beta chain carries the kinase domain. Interacts with PIK3R1 and with the PTB/PID domains of IRS1 and SHC1 in vitro when autophosphorylated on tyrosine residues. Forms a hybrid receptor with INSR, the hybrid is a tetramer consisting of 1 alpha chain and 1 beta chain of INSR and 1 alpha chain and 1 beta chain of IGF1R. Interacts with ARRB1 and ARRB2. Interacts with GRB10. Interacts with RACK1. Interacts with SOCS1, SOCS2 and SOCS3. Interacts with 14-3-3 proteins. Interacts with NMD2. Interacts with MAP3K5. Interacts with STAT3. Found in a ternary complex with IGF1 and ITGAV:ITGB3 or ITGA6:ITGB4. Interacts (nascent precursor form) with ZFAND2B. Autophosphorylated on tyrosine residues in response to ligand binding. Autophosphorylation occurs in trans, i.e. one subunit of the dimeric receptor phosphorylates tyrosine residues on the other subunit. Autophosphorylation occurs in a sequential manner; Tyr-1167 is predominantly phosphorylated first, followed by phosphorylation of Tyr-1163 and Tyr-1168. While every single phosphorylation increases kinase activity, all three tyrosine residues in the kinase activation loop (Tyr-1163, Tyr-1167 and Tyr-1168) have to be phosphorylated for optimal activity. Can be autophosphorylated at additional tyrosine residues (in vitro). Autophosphorylated is followed by phosphorylation of juxtamembrane tyrosines and C-terminal serines. May also be phosphorylated at Tyr-1163 and Tyr-1168 by mTORC2. Phosphorylation of Tyr-981 is required for IRS1- and SHC1-binding. Phosphorylation of Ser-1280 by GSK-3beta restrains kinase activity and promotes cell surface expression, it requires a priming phosphorylation at Ser-1284. Dephosphorylated by PTPN1. In terms of processing, polyubiquitinated at Lys-1170 and Lys-1173 through both 'Lys-48' and 'Lys-29' linkages, promoting receptor endocytosis and subsequent degradation by the proteasome. Ubiquitination is facilitated by pre-existing phosphorylation. Post-translationally, sumoylated with SUMO1. Controlled by regulated intramembrane proteolysis (RIP). Undergoes metalloprotease-dependent constitutive ectodomain shedding to produce a membrane-anchored 52 kDa C-Terminal fragment which is further processed by presenilin gamma-secretase to yield an intracellular 50 kDa fragment.

The protein resides in the cell membrane. It catalyses the reaction L-tyrosyl-[protein] + ATP = O-phospho-L-tyrosyl-[protein] + ADP + H(+). Its activity is regulated as follows. Activated by autophosphorylation at Tyr-1163, Tyr-1167 and Tyr-1168 on the kinase activation loop; phosphorylation at all three tyrosine residues is required for optimal kinase activity. Inhibited by MSC1609119A-1, BMS-754807, PQIP, benzimidazole pyridinone, isoquinolinedione, bis-azaindole, 3-cyanoquinoline, 2,4-bis-arylamino-1,3-pyrimidine, pyrrolopyrimidine, pyrrole-5-carboxaldehyde, picropodophyllin (PPP), tyrphostin derivatives. While most inhibitors bind to the ATP binding pocket, MSC1609119A-1 functions as allosteric inhibitor and binds close to the DFG motif and the activation loop. Receptor tyrosine kinase which mediates actions of insulin-like growth factor 1 (IGF1). Binds IGF1 with high affinity and IGF2 and insulin (INS) with a lower affinity. The activated IGF1R is involved in cell growth and survival control. IGF1R is crucial for tumor transformation and survival of malignant cell. Ligand binding activates the receptor kinase, leading to receptor autophosphorylation, and tyrosines phosphorylation of multiple substrates, that function as signaling adapter proteins including, the insulin-receptor substrates (IRS1/2), Shc and 14-3-3 proteins. Phosphorylation of IRSs proteins lead to the activation of two main signaling pathways: the PI3K-AKT/PKB pathway and the Ras-MAPK pathway. The result of activating the MAPK pathway is increased cellular proliferation, whereas activating the PI3K pathway inhibits apoptosis and stimulates protein synthesis. Phosphorylated IRS1 can activate the 85 kDa regulatory subunit of PI3K (PIK3R1), leading to activation of several downstream substrates, including protein AKT/PKB. AKT phosphorylation, in turn, enhances protein synthesis through mTOR activation and triggers the antiapoptotic effects of IGFIR through phosphorylation and inactivation of BAD. In parallel to PI3K-driven signaling, recruitment of Grb2/SOS by phosphorylated IRS1 or Shc leads to recruitment of Ras and activation of the ras-MAPK pathway. In addition to these two main signaling pathways IGF1R signals also through the Janus kinase/signal transducer and activator of transcription pathway (JAK/STAT). Phosphorylation of JAK proteins can lead to phosphorylation/activation of signal transducers and activators of transcription (STAT) proteins. In particular activation of STAT3, may be essential for the transforming activity of IGF1R. The JAK/STAT pathway activates gene transcription and may be responsible for the transforming activity. JNK kinases can also be activated by the IGF1R. IGF1 exerts inhibiting activities on JNK activation via phosphorylation and inhibition of MAP3K5/ASK1, which is able to directly associate with the IGF1R. When present in a hybrid receptor with INSR, binds IGF1. This chain is Insulin-like growth factor 1 receptor (Igf1r), found in Mus musculus (Mouse).